The following is a 416-amino-acid chain: Phakinin (416 aa).

A disordered region spans residues 1-48 (MSERRVAMDLPSGSNASMPLQRHRVSSLRGTRSPSSLDSPPASRTSAV). The residue at position 2 (S2) is an N-acetylserine. Positions 2–115 (SERRVAMDLP…HATAEDLGGC (114 aa)) are head. S27, S33, S36, and S91 each carry phosphoserine. Over residues 28–48 (LRGTRSPSSLDSPPASRTSAV) the composition is skewed to polar residues. One can recognise an IF rod domain in the interval 105–416 (NHATAEDLGG…HALLDREESN (312 aa)). 2 coiled-coil regions span residues 199 to 240 (FRKA…SLSR) and 314 to 391 (LAAA…ERAH). The interval 397 to 416 (GQLQKDVASYHALLDREESN) is tail.

Belongs to the intermediate filament family. As to quaternary structure, part of a complex required for lens intermediate filament formation composed of BFSP1, BFSP2, and CRYAA. Found in a complex composed of PPL (via C-terminal linker domain), BFSP1 and BFSP2 in the retinal lens. Within the complex interacts with PPL (via C-terminal linker domain) and with BFSP1. Identified in a complex that contains VIM, EZR, AHNAK, BFSP1, BFSP2, ANK2, PLEC, PRX and spectrin. Interacts with LGSN. Interacts with VIM. In terms of tissue distribution, expressed in the deep and shallow cortices of the retina lens (at protein level).

It localises to the cell membrane. The protein localises to the cytoplasm. The protein resides in the cytoskeleton. Its subcellular location is the cell cortex. Its function is as follows. Required for the correct formation of lens intermediate filaments as part of a complex composed of BFSP1, BFSP2 and CRYAA. Plays a role in maintenance of retinal lens optical clarity. This Rattus norvegicus (Rat) protein is Phakinin.